The primary structure comprises 206 residues: Small ribosomal subunit protein uS5 (206 aa).

The interval 1-42 (MENKTEVVVAENANNQTQPERKKFDRKPNRRPQGPKQFQKDD) is disordered. An S5 DRBM domain is found at 43-106 (FEEKVVTIRR…KEAKKNLIRV (64 aa)).

Belongs to the universal ribosomal protein uS5 family. In terms of assembly, part of the 30S ribosomal subunit. Contacts proteins S4 and S8.

Its function is as follows. With S4 and S12 plays an important role in translational accuracy. Located at the back of the 30S subunit body where it stabilizes the conformation of the head with respect to the body. The polypeptide is Small ribosomal subunit protein uS5 (Mesoplasma florum (strain ATCC 33453 / NBRC 100688 / NCTC 11704 / L1) (Acholeplasma florum)).